Reading from the N-terminus, the 267-residue chain is L-aspartate dehydrogenase (267 aa).

NAD(+)-binding residues include alanine 124 and asparagine 190. The active site involves histidine 218.

This sequence belongs to the L-aspartate dehydrogenase family.

The catalysed reaction is L-aspartate + NADP(+) + H2O = oxaloacetate + NH4(+) + NADPH + H(+). It carries out the reaction L-aspartate + NAD(+) + H2O = oxaloacetate + NH4(+) + NADH + H(+). It functions in the pathway cofactor biosynthesis; NAD(+) biosynthesis; iminoaspartate from L-aspartate (dehydrogenase route): step 1/1. In terms of biological role, specifically catalyzes the NAD or NADP-dependent dehydrogenation of L-aspartate to iminoaspartate. This Methanococcus maripaludis (strain DSM 14266 / JCM 13030 / NBRC 101832 / S2 / LL) protein is L-aspartate dehydrogenase.